The primary structure comprises 261 residues: 5'-nucleotidase SurE (261 aa).

Residues Asp-8, Asp-9, Ser-43, and Asn-96 each contribute to the a divalent metal cation site.

Belongs to the SurE nucleotidase family. A divalent metal cation serves as cofactor.

The protein localises to the cytoplasm. It catalyses the reaction a ribonucleoside 5'-phosphate + H2O = a ribonucleoside + phosphate. In terms of biological role, nucleotidase that shows phosphatase activity on nucleoside 5'-monophosphates. The chain is 5'-nucleotidase SurE from Cereibacter sphaeroides (strain ATCC 17029 / ATH 2.4.9) (Rhodobacter sphaeroides).